The chain runs to 352 residues: Outer membrane protein assembly factor BamC (352 aa).

The first 19 residues, 1–19 (MQYWIPKALAVSVLVSLSG), serve as a signal peptide directing secretion. A lipid anchor (N-palmitoyl cysteine) is attached at Cys-20. Cys-20 is lipidated: S-diacylglycerol cysteine.

The protein belongs to the BamC family. Part of the Bam complex.

It localises to the cell outer membrane. Part of the outer membrane protein assembly complex, which is involved in assembly and insertion of beta-barrel proteins into the outer membrane. In Pseudoalteromonas sp. (strain SM9913), this protein is Outer membrane protein assembly factor BamC.